The chain runs to 257 residues: MNRIETAFKNTKPFIGYLTGGDGGFDYSVACAHALIRGGVDILEIGFPFSDPVADGPIIQKAHTRALEEKTDSTTILEIAKALRETSNIPLVLFSYYNPLLQKGPQYLHQLKAAGFDAVLIVDLPIPQHANESEPFFQALIEAKLFPIVLATPSTREERLLQIRKLAKGFLYYVSQKGTTGIRSKLSDDFSTQIARLRCYFQIPIVAGFGIANRASAAAALKHADGIVVGSAFVEKLEKKISPEELTTFAQSIDPRQ.

Residues Glu44 and Asp55 each act as proton acceptor in the active site.

Belongs to the TrpA family. Tetramer of two alpha and two beta chains.

The catalysed reaction is (1S,2R)-1-C-(indol-3-yl)glycerol 3-phosphate + L-serine = D-glyceraldehyde 3-phosphate + L-tryptophan + H2O. It functions in the pathway amino-acid biosynthesis; L-tryptophan biosynthesis; L-tryptophan from chorismate: step 5/5. In terms of biological role, the alpha subunit is responsible for the aldol cleavage of indoleglycerol phosphate to indole and glyceraldehyde 3-phosphate. In Chlamydia caviae (strain ATCC VR-813 / DSM 19441 / 03DC25 / GPIC) (Chlamydophila caviae), this protein is Tryptophan synthase alpha chain.